We begin with the raw amino-acid sequence, 509 residues long: Probable aspartic-type endopeptidase CTSD (509 aa).

The signal sequence occupies residues 1–21; the sequence is MQFLWLCLLSAVTLQFTGTLA. The 307-residue stretch at 102 to 408 folds into the Peptidase A1 domain; it reads YFSEVKVGSE…DFDKNRVGLA (307 aa). D120 is an active-site residue. N174 is a glycosylation site (N-linked (GlcNAc...) asparagine). D302 is an active-site residue. A glycan (N-linked (GlcNAc...) asparagine) is linked at N361. A disordered region spans residues 451–489; it reads NKAPSGGSPGLPAESGSDSTTNGEATNGATSSPNSSSSV. Positions 466–480 are enriched in polar residues; it reads GSDSTTNGEATNGAT. N-linked (GlcNAc...) asparagine glycosylation occurs at N484. S485 carries GPI-anchor amidated serine lipidation. The propeptide at 486-509 is removed in mature form; that stretch reads SSSVLTPTWLTLAVFFAIGSSLWS.

The protein belongs to the peptidase A1 family.

Its subcellular location is the cell membrane. In terms of biological role, probable GPI-anchored aspartic-type endopeptidase which contributes to virulence. The polypeptide is Probable aspartic-type endopeptidase CTSD (CTSD) (Arthroderma benhamiae (strain ATCC MYA-4681 / CBS 112371) (Trichophyton mentagrophytes)).